A 286-amino-acid chain; its full sequence is MLRRGLLSFFMVILIDRGTSQLYSSDMCNWKGSGLTHEGHTKDVEQVYLRCSEGSVEWLYPTGAMVINLRPNTLTSAYKHLTVCIKPFKDSKGANIYSEKTGELKLVVPDGENNPHKVYCFGLDRGGLYIEATPQQDISRKITGFQYELISQRTLSDLHTVSDPCRPCSDTEVLLAVCISDFVVKGTISAVTNDEELQESLINVTVDKLYRQKSKIFLPKDNGGWEGMIRTPLECGVKTGMGSFLFTGRMHFGEPRLGCTPRYKDFKRIYLEAKKQGLNPCEISTD.

An N-terminal signal peptide occupies residues 1-20 (MLRRGLLSFFMVILIDRGTS). Intrachain disulfides connect Cys28/Cys51, Cys84/Cys120, Cys165/Cys235, Cys168/Cys259, and Cys178/Cys281. The N-linked (GlcNAc...) asparagine glycan is linked to Asn203.

This sequence belongs to the meteorin family.

The protein localises to the secreted. Its function is as follows. Hormone induced following exercise or cold exposure that promotes energy expenditure. Induced either in the skeletal muscle after exercise or in adipose tissue following cold exposure and is present in the circulation. Able to stimulate energy expenditure associated with the browning of the white fat depots and improves glucose tolerance. This is Meteorin-like protein (metrnl) from Xenopus laevis (African clawed frog).